The primary structure comprises 227 residues: Cytochrome c oxidase subunit 2 (227 aa).

The Mitochondrial intermembrane portion of the chain corresponds to 1 to 14 (MAYPMQLGLQDATS). The chain crosses the membrane as a helical span at residues 15 to 45 (PIMEELMNFHDHTLMIVFLISSLVLYLISLM). The Mitochondrial matrix segment spans residues 46-59 (LTTKLIHTNTMDAQ). Residues 60–87 (EVETIWTILPAIILVLIALPSLRILYMM) traverse the membrane as a helical segment. At 88–227 (DEINNPVLTV…FFENWSSSMT (140 aa)) the chain is on the mitochondrial intermembrane side. Residues His-161, Cys-196, Glu-198, Cys-200, His-204, and Met-207 each contribute to the Cu cation site. Position 198 (Glu-198) interacts with Mg(2+).

The protein belongs to the cytochrome c oxidase subunit 2 family. Component of the cytochrome c oxidase (complex IV, CIV), a multisubunit enzyme composed of 14 subunits. The complex is composed of a catalytic core of 3 subunits MT-CO1, MT-CO2 and MT-CO3, encoded in the mitochondrial DNA, and 11 supernumerary subunits COX4I, COX5A, COX5B, COX6A, COX6B, COX6C, COX7A, COX7B, COX7C, COX8 and NDUFA4, which are encoded in the nuclear genome. The complex exists as a monomer or a dimer and forms supercomplexes (SCs) in the inner mitochondrial membrane with NADH-ubiquinone oxidoreductase (complex I, CI) and ubiquinol-cytochrome c oxidoreductase (cytochrome b-c1 complex, complex III, CIII), resulting in different assemblies (supercomplex SCI(1)III(2)IV(1) and megacomplex MCI(2)III(2)IV(2)). Found in a complex with TMEM177, COA6, COX18, COX20, SCO1 and SCO2. Interacts with TMEM177 in a COX20-dependent manner. Interacts with COX20. Interacts with COX16. It depends on Cu cation as a cofactor.

It localises to the mitochondrion inner membrane. It catalyses the reaction 4 Fe(II)-[cytochrome c] + O2 + 8 H(+)(in) = 4 Fe(III)-[cytochrome c] + 2 H2O + 4 H(+)(out). Its function is as follows. Component of the cytochrome c oxidase, the last enzyme in the mitochondrial electron transport chain which drives oxidative phosphorylation. The respiratory chain contains 3 multisubunit complexes succinate dehydrogenase (complex II, CII), ubiquinol-cytochrome c oxidoreductase (cytochrome b-c1 complex, complex III, CIII) and cytochrome c oxidase (complex IV, CIV), that cooperate to transfer electrons derived from NADH and succinate to molecular oxygen, creating an electrochemical gradient over the inner membrane that drives transmembrane transport and the ATP synthase. Cytochrome c oxidase is the component of the respiratory chain that catalyzes the reduction of oxygen to water. Electrons originating from reduced cytochrome c in the intermembrane space (IMS) are transferred via the dinuclear copper A center (CU(A)) of subunit 2 and heme A of subunit 1 to the active site in subunit 1, a binuclear center (BNC) formed by heme A3 and copper B (CU(B)). The BNC reduces molecular oxygen to 2 water molecules using 4 electrons from cytochrome c in the IMS and 4 protons from the mitochondrial matrix. The sequence is that of Cytochrome c oxidase subunit 2 (MT-CO2) from Desmodillus auricularis (Cape short-eared gerbil).